A 354-amino-acid chain; its full sequence is Magnesium-protoporphyrin IX monomethyl ester [oxidative] cyclase 2 (354 aa).

The protein belongs to the AcsF family. Requires Fe cation as cofactor.

It carries out the reaction Mg-protoporphyrin IX 13-monomethyl ester + 3 NADPH + 3 O2 + 2 H(+) = 3,8-divinyl protochlorophyllide a + 3 NADP(+) + 5 H2O. It functions in the pathway porphyrin-containing compound metabolism; chlorophyll biosynthesis (light-independent). Catalyzes the formation of the isocyclic ring in chlorophyll biosynthesis. Mediates the cyclase reaction, which results in the formation of divinylprotochlorophyllide (Pchlide) characteristic of all chlorophylls from magnesium-protoporphyrin IX 13-monomethyl ester (MgPMME). The polypeptide is Magnesium-protoporphyrin IX monomethyl ester [oxidative] cyclase 2 (Thermosynechococcus vestitus (strain NIES-2133 / IAM M-273 / BP-1)).